A 370-amino-acid polypeptide reads, in one-letter code: Putrescine-binding periplasmic protein PotF (370 aa).

A signal peptide spans 1–26 (MTALNKKWLSGLVAGALMAVSVGTLA). Ser-38 contributes to the putrescine binding site. Cys-175 and Cys-239 are disulfide-bonded. Putrescine contacts are provided by Asp-247 and Asp-278.

This sequence belongs to the bacterial solute-binding protein PotD/PotF family. As to quaternary structure, the complex is composed of two ATP-binding proteins (PotG), two transmembrane proteins (PotH and PotI) and a solute-binding protein (PotF).

The protein localises to the periplasm. With respect to regulation, transport is feedback inhibited by intracellular polyamines. In terms of biological role, part of the ABC transporter complex PotFGHI involved in putrescine uptake. Binds putrescine. Imports putrescine for maintenance of the optimal concentration of polyamines necessary for cell growth in the presence of glucose. The polypeptide is Putrescine-binding periplasmic protein PotF (Escherichia coli (strain K12)).